We begin with the raw amino-acid sequence, 238 residues long: Flagellar L-ring protein (238 aa).

A signal peptide spans 1–17; sequence MKRRLLAAGCAMLLLSG. Cys-18 carries N-palmitoyl cysteine lipidation. A lipid anchor (S-diacylglycerol cysteine) is attached at Cys-18. The segment at 22–50 is disordered; that stretch reads RQQPSPVPPVTQPQAYAEPEDTAANPGSL.

It belongs to the FlgH family. The basal body constitutes a major portion of the flagellar organelle and consists of four rings (L,P,S, and M) mounted on a central rod.

It localises to the cell outer membrane. The protein localises to the bacterial flagellum basal body. Functionally, assembles around the rod to form the L-ring and probably protects the motor/basal body from shearing forces during rotation. This chain is Flagellar L-ring protein, found in Nitratidesulfovibrio vulgaris (strain DSM 19637 / Miyazaki F) (Desulfovibrio vulgaris).